Here is a 364-residue protein sequence, read N- to C-terminus: Alanine racemase (364 aa).

Lysine 35 functions as the Proton acceptor; specific for D-alanine in the catalytic mechanism. Lysine 35 is subject to N6-(pyridoxal phosphate)lysine. Arginine 131 is a substrate binding site. Tyrosine 256 serves as the catalytic Proton acceptor; specific for L-alanine. Methionine 304 provides a ligand contact to substrate.

Belongs to the alanine racemase family. Requires pyridoxal 5'-phosphate as cofactor.

The enzyme catalyses L-alanine = D-alanine. Its pathway is amino-acid biosynthesis; D-alanine biosynthesis; D-alanine from L-alanine: step 1/1. Its function is as follows. Catalyzes the interconversion of L-alanine and D-alanine. May also act on other amino acids. In Halorhodospira halophila (strain DSM 244 / SL1) (Ectothiorhodospira halophila (strain DSM 244 / SL1)), this protein is Alanine racemase (alr).